The primary structure comprises 235 residues: Purine nucleoside phosphorylase DeoD-type (235 aa).

His4 lines the a purine D-ribonucleoside pocket. Residues Gly20, Arg24, Arg43, and 87-90 (RVGT) contribute to the phosphate site. A purine D-ribonucleoside contacts are provided by residues Glu162, 179–181 (EME), and 203–204 (SD). Asp204 functions as the Proton donor in the catalytic mechanism.

The protein belongs to the PNP/UDP phosphorylase family. As to quaternary structure, homohexamer; trimer of homodimers.

The enzyme catalyses a purine D-ribonucleoside + phosphate = a purine nucleobase + alpha-D-ribose 1-phosphate. It carries out the reaction a purine 2'-deoxy-D-ribonucleoside + phosphate = a purine nucleobase + 2-deoxy-alpha-D-ribose 1-phosphate. Functionally, catalyzes the reversible phosphorolytic breakdown of the N-glycosidic bond in the beta-(deoxy)ribonucleoside molecules, with the formation of the corresponding free purine bases and pentose-1-phosphate. This is Purine nucleoside phosphorylase DeoD-type from Bacillus cereus (strain ATCC 14579 / DSM 31 / CCUG 7414 / JCM 2152 / NBRC 15305 / NCIMB 9373 / NCTC 2599 / NRRL B-3711).